A 127-amino-acid polypeptide reads, in one-letter code: Cold-regulated protein 1 (127 aa).

The segment at 39-127 (ARGPPPSPAP…WTRPRMARAR (89 aa)) is disordered. Residues 85 to 101 (SRRRRRRRATRRARSRM) are compositionally biased toward basic residues. The span at 102–121 (PRTTPWRAPRAPARAWWTRP) shows a compositional bias: low complexity.

The sequence is that of Cold-regulated protein 1 from Hordeum vulgare (Barley).